The chain runs to 313 residues: Putative S-adenosyl-L-methionine-dependent methyltransferase MAP_3563 (313 aa).

S-adenosyl-L-methionine contacts are provided by residues D139 and 168–169 (DL).

It belongs to the UPF0677 family.

In terms of biological role, exhibits S-adenosyl-L-methionine-dependent methyltransferase activity. This chain is Putative S-adenosyl-L-methionine-dependent methyltransferase MAP_3563, found in Mycolicibacterium paratuberculosis (strain ATCC BAA-968 / K-10) (Mycobacterium paratuberculosis).